A 315-amino-acid chain; its full sequence is Acetyl-coenzyme A carboxylase carboxyl transferase subunit alpha (315 aa).

The 254-residue stretch at 40 to 293 (LQDKSKTLTE…REELSSQLAM (254 aa)) folds into the CoA carboxyltransferase C-terminal domain.

This sequence belongs to the AccA family. Acetyl-CoA carboxylase is a heterohexamer composed of biotin carboxyl carrier protein (AccB), biotin carboxylase (AccC) and two subunits each of ACCase subunit alpha (AccA) and ACCase subunit beta (AccD).

Its subcellular location is the cytoplasm. It carries out the reaction N(6)-carboxybiotinyl-L-lysyl-[protein] + acetyl-CoA = N(6)-biotinyl-L-lysyl-[protein] + malonyl-CoA. Its pathway is lipid metabolism; malonyl-CoA biosynthesis; malonyl-CoA from acetyl-CoA: step 1/1. Its function is as follows. Component of the acetyl coenzyme A carboxylase (ACC) complex. First, biotin carboxylase catalyzes the carboxylation of biotin on its carrier protein (BCCP) and then the CO(2) group is transferred by the carboxyltransferase to acetyl-CoA to form malonyl-CoA. The polypeptide is Acetyl-coenzyme A carboxylase carboxyl transferase subunit alpha (Pseudomonas syringae pv. tomato (strain ATCC BAA-871 / DC3000)).